The sequence spans 550 residues: Glucose import ATP-binding protein TsgD13 (550 aa).

2 ABC transporter domains span residues 7–270 (LRME…VGRE) and 287–533 (LRAR…TGGG). 39–46 (GENGAGKS) lines the ATP pocket. The disordered stretch occupies residues 529–550 (MTGGGDATATAGAQVRGLGGSS).

The protein belongs to the ABC transporter superfamily. In terms of assembly, the complex is composed of two ATP-binding proteins (TsgD13), two transmembrane proteins (TsgB13 and TsgC13) and a solute-binding protein (TsgA13).

Its subcellular location is the cell membrane. It carries out the reaction D-glucose(out) + ATP + H2O = D-glucose(in) + ADP + phosphate + H(+). Functionally, part of an ABC transporter complex involved in glucose import. Responsible for energy coupling to the transport system. The chain is Glucose import ATP-binding protein TsgD13 (tsgD13) from Haloferax volcanii (strain ATCC 29605 / DSM 3757 / JCM 8879 / NBRC 14742 / NCIMB 2012 / VKM B-1768 / DS2) (Halobacterium volcanii).